Here is a 687-residue protein sequence, read N- to C-terminus: Guanine-nucleotide exchange factor YEL1 (687 aa).

Over residues 14–27 (YGVSQKGYNDNFSE) the composition is skewed to polar residues. 2 disordered regions span residues 14-35 (YGVS…LHGS) and 63-97 (AAND…TDQN). Residues 57 to 264 (ILQNKEAAND…SEYYKTLNET (208 aa)) enclose the SEC7 domain. The segment covering 73 to 83 (TTDTATAGTGT) has biased composition (low complexity). T290 is subject to Phosphothreonine. Phosphoserine is present on residues S293 and S299. The PH domain maps to 412-551 (ASRRTSLSYL…DCINFWAGRI (140 aa)).

It belongs to the YEL1 family.

Its subcellular location is the cytoplasm. The protein resides in the cell membrane. The protein localises to the bud neck. It localises to the bud tip. Its function is as follows. Guanine nucleotide exchange factor for ARF3 required for localization of ARF3 to the bud neck and tip and involved in actin patch polarization. This is Guanine-nucleotide exchange factor YEL1 (YEL1) from Saccharomyces cerevisiae (strain RM11-1a) (Baker's yeast).